Consider the following 283-residue polypeptide: uncharacterized protein (283 aa).

3 consecutive transmembrane segments (helical) span residues 24–44 (LFGY…GMFI), 64–84 (TIAG…TLIA), and 96–116 (VIAI…GSLS).

This sequence belongs to the MscS (TC 1.A.23) family.

Its subcellular location is the cell membrane. This is an uncharacterized protein from Buchnera aphidicola subsp. Schizaphis graminum (strain Sg).